Reading from the N-terminus, the 480-residue chain is Speriolin (480 aa).

The segment at 1 to 76 (MSLLTSYEGL…HQGVFLPPAS (76 aa)) is necessary for targeting to centrosomes. Residues 2-45 (SLLTSYEGLRHQIERLVRENEELKKLVRLIRENQELKSAIKTQA) are a coiled coil. Disordered stretches follow at residues 252–297 (INNI…SRVM) and 305–324 (VEME…DNPR).

Belongs to the speriolin family. In terms of assembly, found in a complex with CDC20, CDC27 and TUBG1. Interacts with CDC20. Expressed in testis. Expressed in pachyten spermatocytes, spermatids and epididymal sperm (at protein level).

The protein resides in the cytoplasm. It is found in the cytoskeleton. The protein localises to the microtubule organizing center. Its subcellular location is the centrosome. The chain is Speriolin (Spatc1) from Mus musculus (Mouse).